The sequence spans 495 residues: Major facilitator-type transporter hxnP (495 aa).

The disordered stretch occupies residues 1 to 24 (MGATATDIEKVPSAGTPDEPKAGE). The next 5 helical transmembrane spans lie at 36-55 (SFVR…MYFF), 84-104 (LLIL…NLLI), 123-143 (VWGI…LLAI), 145-165 (IILG…FTLF), and 177-197 (VLQS…FGLF). An N-linked (GlcNAc...) asparagine glycan is attached at N200. 5 consecutive transmembrane segments (helical) span residues 209–229 (WLFI…FWWL), 282–302 (VITF…PIIV), 314–334 (LWTV…AKSS), 341–361 (SLHI…LASI), and 368–388 (GVSY…TCLV). An N-linked (GlcNAc...) asparagine glycan is attached at N395. 2 helical membrane passes run 404 to 424 (ANTG…AATF) and 436 to 456 (LVAT…MGTW).

This sequence belongs to the major facilitator superfamily.

It localises to the cell membrane. Functionally, major facilitator-type transporter, part of the hnx cluster involved in the purine degradation. The nicotinate hydroxylase hnxS accepts nicotinate as a substrate and catalyzes the first step of nicotinate catabolism. The major facilitator-type transporters hxnP and hxnZ are probably involved in the uptake of nicotinate-derived metabolites, and the oxidoreductases hxnT and hxnY in the further metabolism of 6-OH nicotinic acid. In Emericella nidulans (strain FGSC A4 / ATCC 38163 / CBS 112.46 / NRRL 194 / M139) (Aspergillus nidulans), this protein is Major facilitator-type transporter hxnP.